Consider the following 338-residue polypeptide: Lipoate-protein ligase A (338 aa).

The BPL/LPL catalytic domain maps to 29-216; the sequence is SPNQRVLFLW…AFFAYYDEQV (188 aa). ATP contacts are provided by residues arginine 71, 76-79, and lysine 134; that span reads GAVF. Lysine 134 provides a ligand contact to (R)-lipoate.

This sequence belongs to the LplA family. In terms of assembly, monomer.

It is found in the cytoplasm. The enzyme catalyses L-lysyl-[lipoyl-carrier protein] + (R)-lipoate + ATP = N(6)-[(R)-lipoyl]-L-lysyl-[lipoyl-carrier protein] + AMP + diphosphate + H(+). It participates in protein modification; protein lipoylation via exogenous pathway; protein N(6)-(lipoyl)lysine from lipoate: step 1/2. It functions in the pathway protein modification; protein lipoylation via exogenous pathway; protein N(6)-(lipoyl)lysine from lipoate: step 2/2. Its function is as follows. Catalyzes both the ATP-dependent activation of exogenously supplied lipoate to lipoyl-AMP and the transfer of the activated lipoyl onto the lipoyl domains of lipoate-dependent enzymes. In Yersinia pseudotuberculosis serotype O:1b (strain IP 31758), this protein is Lipoate-protein ligase A.